The primary structure comprises 399 residues: Cytohesin-3 (399 aa).

Residues 14–61 are a coiled coil; sequence EDLSLEEREELLDIRRRKKELIDDIERLKYEIAEVMTEIDNLTSVEES. An SEC7 domain is found at 77 to 206; the sequence is FNMDPKKGIQ…IIMLNTSLHN (130 aa). The region spanning 264 to 380 is the PH domain; sequence NPDREGWLLK…WMKSIKASIS (117 aa). A 1,2-diacyl-sn-glycero-3-phospho-(1D-myo-inositol-3,4,5-trisphosphate) is bound by residues 273–280, Arg-284, Tyr-295, Arg-305, and Asn-354; that span reads KLGGRVKT. Positions 391-399 are C-terminal autoinhibitory region; that stretch reads RKRRIANKK.

Interacts with TAMALIN. Interacts with FRMD4A. Interacts with FRMD4B.

The protein localises to the cytoplasm. It localises to the cytosol. Its subcellular location is the cell membrane. It is found in the cell junction. The protein resides in the adherens junction. The protein localises to the tight junction. In terms of biological role, promotes guanine-nucleotide exchange on ARF1. Promotes the activation of ARF factors through replacement of GDP with GTP. Plays a role in the epithelial polarization. This chain is Cytohesin-3 (Cyth3), found in Mus musculus (Mouse).